We begin with the raw amino-acid sequence, 89 residues long: MPLDTTTKQKLINVHQTHSTDTGSVEVQVAMLTERISKLSGHLQQNKHDFSSRQGLLKMIGRRKRLLNYLRSLGEDRYSQLINKLGIRG.

It belongs to the universal ribosomal protein uS15 family. Part of the 30S ribosomal subunit.

Its subcellular location is the plastid. It is found in the organellar chromatophore. This Paulinella chromatophora protein is Small ribosomal subunit protein uS15c (rps15).